Here is a 398-residue protein sequence, read N- to C-terminus: Signal-regulatory protein beta-1 isoform 3 (398 aa).

The N-terminal stretch at 1 to 29 (MPVPASWPHLPSPFLLMTLLLGRLTGVAG) is a signal peptide. At 30–371 (EEELQVIQPD…GPALASAAPL (342 aa)) the chain is on the extracellular side. The region spanning 31–136 (EELQVIQPDK…SPDHVEFKSG (106 aa)) is the Ig-like V-type domain. Intrachain disulfides connect C54–C120 and C169–C227. 2 consecutive Ig-like C1-type domains span residues 147-246 (PSAP…ANLS) and 253-347 (PTLE…HDLK). N244, N291, and N318 each carry an N-linked (GlcNAc...) asparagine glycan. A disulfide bridge links C272 with C330. Basic and acidic residues predominate over residues 337-354 (QPAVSKSHDLKVSAHPKE). The segment at 337 to 361 (QPAVSKSHDLKVSAHPKEQGSNTAP) is disordered. The chain crosses the membrane as a helical span at residues 372 to 392 (LIAFLLGPKVLLVVGVSVIYV). Topologically, residues 393-398 (YWKQKA) are cytoplasmic.

It localises to the membrane. Functionally, immunoglobulin-like cell surface receptor involved in the negative regulation of receptor tyrosine kinase-coupled signaling processes. This is Signal-regulatory protein beta-1 isoform 3 (SIRPB1) from Homo sapiens (Human).